A 1060-amino-acid polypeptide reads, in one-letter code: Positive regulator of purine utilization (1060 aa).

Residues 1 to 15 (MLNPSTSDIHTSPTA) are compositionally biased toward polar residues. A disordered region spans residues 1–48 (MLNPSTSDIHTSPTAVGNGRKRPHPIADSGSAMPSDPSAQQLPHPANE). The zn(2)-C6 fungal-type DNA-binding region spans 67–94 (CNRCRQRKNRCDQRLPRCQACEKAGVRC). 5 disordered regions span residues 163 to 207 (EIAA…DAED), 251 to 282 (SVPGNSSERGPSRPKERLPHSATGTEGSTTRD), 367 to 391 (AEDQKEGRDHSPSATKRQRLSSRQY), 811 to 862 (VQTS…RFDM), and 877 to 969 (RQGS…PSGM). 3 stretches are compositionally biased toward basic and acidic residues: residues 170-182 (SNDKSVRIKKEKN), 189-207 (KASRYDHDPEVKQDSDAED), and 260-269 (GPSRPKERLP). Residues 272–282 (ATGTEGSTTRD) show a composition bias toward polar residues. Residues 367–377 (AEDQKEGRDHS) show a composition bias toward basic and acidic residues. A compositionally biased stretch (polar residues) spans 811-831 (VQTSTSGSRQFNATQSRSRPY). Low complexity-rich tracts occupy residues 832 to 859 (SRQQAEQRQRQSASRRQLQMRQSRPLPR) and 930 to 952 (PRYYYNNSPQQSGSPGSVVAASG).

It localises to the nucleus. Functionally, mediates the induction of a number of unlinked genes involved in purine utilization. Binds to the consensus sequence 5'-TCGGNNNNNNCCGA-3'. The polypeptide is Positive regulator of purine utilization (uaY) (Emericella nidulans (strain FGSC A4 / ATCC 38163 / CBS 112.46 / NRRL 194 / M139) (Aspergillus nidulans)).